The following is a 281-amino-acid chain: 2-dehydro-3-deoxyphosphooctonate aldolase (281 aa).

Belongs to the KdsA family.

It is found in the cytoplasm. The catalysed reaction is D-arabinose 5-phosphate + phosphoenolpyruvate + H2O = 3-deoxy-alpha-D-manno-2-octulosonate-8-phosphate + phosphate. The protein operates within carbohydrate biosynthesis; 3-deoxy-D-manno-octulosonate biosynthesis; 3-deoxy-D-manno-octulosonate from D-ribulose 5-phosphate: step 2/3. Its pathway is bacterial outer membrane biogenesis; lipopolysaccharide biosynthesis. The polypeptide is 2-dehydro-3-deoxyphosphooctonate aldolase (Stutzerimonas stutzeri (strain A1501) (Pseudomonas stutzeri)).